We begin with the raw amino-acid sequence, 337 residues long: Adenylosuccinate synthetase (337 aa).

GTP contacts are provided by residues 12-18 and 42-44; these read GDEGKGK and GHT. The Proton acceptor role is filled by Asp-13. 2 residues coordinate Mg(2+): Asp-13 and Gly-42. IMP-binding positions include 13–16, 40–43, Thr-127, Arg-141, Gln-179, Thr-194, and Arg-256; these read DEGK and NAGH. His-43 acts as the Proton donor in catalysis. 252–258 lines the substrate pocket; it reads TVTGRRR. GTP-binding positions include Arg-258, 284-286, and 324-326; these read CLD and STG.

This sequence belongs to the adenylosuccinate synthetase family. In terms of assembly, homodimer. It depends on Mg(2+) as a cofactor.

It is found in the cytoplasm. The enzyme catalyses IMP + L-aspartate + GTP = N(6)-(1,2-dicarboxyethyl)-AMP + GDP + phosphate + 2 H(+). It participates in purine metabolism; AMP biosynthesis via de novo pathway; AMP from IMP: step 1/2. Functionally, plays an important role in the de novo pathway of purine nucleotide biosynthesis. Catalyzes the first committed step in the biosynthesis of AMP from IMP. The chain is Adenylosuccinate synthetase from Methanococcus maripaludis (strain C6 / ATCC BAA-1332).